The following is a 256-amino-acid chain: uncharacterized protein (256 aa).

The next 6 membrane-spanning stretches (helical) occupy residues 6–26 (TSFI…VSFL), 29–49 (LALV…GTFI), 61–81 (ISGT…GLYF), 145–165 (IIGC…TGIA), 175–195 (YYFK…IWLI), and 218–238 (IGWL…AIQF).

It belongs to the DedA family.

It is found in the cell membrane. This is an uncharacterized protein from Buchnera aphidicola subsp. Acyrthosiphon pisum (strain APS) (Acyrthosiphon pisum symbiotic bacterium).